A 241-amino-acid polypeptide reads, in one-letter code: MTTATQSSAPGVNVDQAEVEKFSALAARWWDPESEFKPLHAINPLRLGWIQETAGSLSGKRVLDMGCGGGILSESMAVAGAQVTGIDLAEKSLKIARLHGLESGVKVDYRAVPVEELAAEQPGQYDVVTCMEMLEHVPDPASVVRACAALAKPGGWVFFSTLNRNPKSFLFAIVGAEYVLRLLPRGTHSYDSFIKPSELATSARQAGLEPTGMRGMEYNPITQVYSLSANTSVNYLMSTRK.

Residues arginine 46, glycine 66, aspartate 87, and methionine 131 each contribute to the S-adenosyl-L-methionine site.

It belongs to the methyltransferase superfamily. UbiG/COQ3 family.

The catalysed reaction is a 3-demethylubiquinol + S-adenosyl-L-methionine = a ubiquinol + S-adenosyl-L-homocysteine + H(+). It catalyses the reaction a 3-(all-trans-polyprenyl)benzene-1,2-diol + S-adenosyl-L-methionine = a 2-methoxy-6-(all-trans-polyprenyl)phenol + S-adenosyl-L-homocysteine + H(+). It functions in the pathway cofactor biosynthesis; ubiquinone biosynthesis. Functionally, O-methyltransferase that catalyzes the 2 O-methylation steps in the ubiquinone biosynthetic pathway. This Bordetella pertussis (strain Tohama I / ATCC BAA-589 / NCTC 13251) protein is Ubiquinone biosynthesis O-methyltransferase.